The following is a 277-amino-acid chain: MEGASRHGLATARATLDEATAIPPGAAVTSVDASRVADDLRAVADLLHREPTVRRALTDPGAPPAARTELAARLLGRQLDAVSLRIVQTAVSSRWSRPADLQFALLELSVEALLVEAERDGALEEVEDELFRFARILGQNPQLALALTDPAAPASVKNALLGRLLSGRAHPVTLRLAQQAAADRIHGDVERRLADFSRIAAARRGRVVAVVRTAVPLTDEVIARLGAAISRYFGRQIQLQVDLDPELLGGVVVKVGDEVVDGSVLRRLAAARRALLR.

Belongs to the ATPase delta chain family. As to quaternary structure, F-type ATPases have 2 components, F(1) - the catalytic core - and F(0) - the membrane proton channel. F(1) has five subunits: alpha(3), beta(3), gamma(1), delta(1), epsilon(1). F(0) has three main subunits: a(1), b(2) and c(10-14). The alpha and beta chains form an alternating ring which encloses part of the gamma chain. F(1) is attached to F(0) by a central stalk formed by the gamma and epsilon chains, while a peripheral stalk is formed by the delta and b chains.

It is found in the cell membrane. Its function is as follows. F(1)F(0) ATP synthase produces ATP from ADP in the presence of a proton or sodium gradient. F-type ATPases consist of two structural domains, F(1) containing the extramembraneous catalytic core and F(0) containing the membrane proton channel, linked together by a central stalk and a peripheral stalk. During catalysis, ATP synthesis in the catalytic domain of F(1) is coupled via a rotary mechanism of the central stalk subunits to proton translocation. This protein is part of the stalk that links CF(0) to CF(1). It either transmits conformational changes from CF(0) to CF(1) or is implicated in proton conduction. The chain is ATP synthase subunit delta from Frankia alni (strain DSM 45986 / CECT 9034 / ACN14a).